A 609-amino-acid chain; its full sequence is Autophagy-related protein 22-1 (609 aa).

A run of 4 helical transmembrane segments spans residues Y95 to I115, T117 to I137, L151 to V171, and M176 to L196. Residues A214–D238 form a disordered region. Residues R225–D238 show a composition bias toward basic and acidic residues. A glycan (N-linked (GlcNAc...) asparagine) is linked at N244. A helical membrane pass occupies residues I287–A307. N309 carries an N-linked (GlcNAc...) asparagine glycan. Helical transmembrane passes span L317 to L337, I381 to T401, and A415 to W435. The N-linked (GlcNAc...) asparagine glycan is linked to N443. 4 helical membrane-spanning segments follow: residues I450 to P470, F487 to G509, A522 to I542, and A552 to V572.

Belongs to the ATG22 family.

The protein localises to the vacuole membrane. Vacuolar effluxer which mediate the efflux of amino acids resulting from autophagic degradation. The release of autophagic amino acids allows the maintenance of protein synthesis and viability during nitrogen starvation. This is Autophagy-related protein 22-1 (atg22-1) from Neosartorya fischeri (strain ATCC 1020 / DSM 3700 / CBS 544.65 / FGSC A1164 / JCM 1740 / NRRL 181 / WB 181) (Aspergillus fischerianus).